Reading from the N-terminus, the 77-residue chain is uncharacterized protein (77 aa).

Positions 53–77 are disordered; it reads KRVSSEANKEKSDITELLRKQVRPD.

This is an uncharacterized protein from Escherichia coli (strain K12).